The primary structure comprises 223 residues: RNA pyrophosphohydrolase (223 aa).

Positions 6 to 149 (GFRPNVGIIL…KRGVYEMALT (144 aa)) constitute a Nudix hydrolase domain. The Nudix box signature appears at 38–59 (GGIDRGESPEQAMFRELHEEVG). The disordered stretch occupies residues 175–223 (ERHMPDGGAPAGLDLPPGGSFDPHPDITSASDDPSPPPHNKAPFLPSQR). Residues 180-193 (DGGAPAGLDLPPGG) show a composition bias toward low complexity.

This sequence belongs to the Nudix hydrolase family. RppH subfamily. A divalent metal cation serves as cofactor.

Functionally, accelerates the degradation of transcripts by removing pyrophosphate from the 5'-end of triphosphorylated RNA, leading to a more labile monophosphorylated state that can stimulate subsequent ribonuclease cleavage. In Variovorax paradoxus (strain S110), this protein is RNA pyrophosphohydrolase.